Consider the following 453-residue polypeptide: F-box/FBD/LRR-repeat protein At4g00160 (453 aa).

Residues 15–68 (KDRISELPDALLIKILSFLPTKIVVATSVFSKQWRPLWKLVPNLEFDSEDYDDK) enclose the F-box domain. LRR repeat units lie at residues 89 to 111 (LESF…LWVG), 165 to 190 (MKSL…LLSG), 215 to 239 (VPSL…VINA), 247 to 270 (IEDL…IFDG), 282 to 307 (LTSV…IFYQ), and 331 to 358 (SPKL…KWNE). Residues 355–406 (KWNEPKYVPECLLSHLETFVWRRFDWGREEEKEIATYILKNARRLNKATFST) form the FBD domain.

The polypeptide is F-box/FBD/LRR-repeat protein At4g00160 (Arabidopsis thaliana (Mouse-ear cress)).